We begin with the raw amino-acid sequence, 335 residues long: N-acetyl-gamma-glutamyl-phosphate reductase (335 aa).

The active site involves cysteine 147.

This sequence belongs to the NAGSA dehydrogenase family. Type 1 subfamily.

Its subcellular location is the cytoplasm. The catalysed reaction is N-acetyl-L-glutamate 5-semialdehyde + phosphate + NADP(+) = N-acetyl-L-glutamyl 5-phosphate + NADPH + H(+). The protein operates within amino-acid biosynthesis; L-arginine biosynthesis; N(2)-acetyl-L-ornithine from L-glutamate: step 3/4. Its function is as follows. Catalyzes the NADPH-dependent reduction of N-acetyl-5-glutamyl phosphate to yield N-acetyl-L-glutamate 5-semialdehyde. The polypeptide is N-acetyl-gamma-glutamyl-phosphate reductase (Sulfurovum sp. (strain NBC37-1)).